The chain runs to 692 residues: Elongation factor G (692 aa).

Positions 8 to 282 (ENTRNIGIMA…AVIDYLPSPL (275 aa)) constitute a tr-type G domain. GTP-binding positions include 17-24 (AHIDAGKT), 81-85 (DTPGH), and 135-138 (NKMD).

The protein belongs to the TRAFAC class translation factor GTPase superfamily. Classic translation factor GTPase family. EF-G/EF-2 subfamily.

Its subcellular location is the cytoplasm. Catalyzes the GTP-dependent ribosomal translocation step during translation elongation. During this step, the ribosome changes from the pre-translocational (PRE) to the post-translocational (POST) state as the newly formed A-site-bound peptidyl-tRNA and P-site-bound deacylated tRNA move to the P and E sites, respectively. Catalyzes the coordinated movement of the two tRNA molecules, the mRNA and conformational changes in the ribosome. In Bacillus anthracis (strain CDC 684 / NRRL 3495), this protein is Elongation factor G.